A 667-amino-acid polypeptide reads, in one-letter code: Transmembrane 9 superfamily member 1 (667 aa).

An N-terminal signal peptide occupies residues 1–22 (MIYKMAHVQLLLLYFFVSTVKA). At 23–302 (FYLPGVAPTT…DKYLHVYDPS (280 aa)) the chain is on the lumenal side. N-linked (GlcNAc...) asparagine glycosylation is found at asparagine 61 and asparagine 282. Residues 303–323 (IQWFSLINFSLVVVLLSSVVI) form a helical membrane-spanning segment. Topologically, residues 324–370 (HSLLRALKSDFARYNELNLDDDFQEDSGWKLNHGDVFRSPSQSLTLS) are cytoplasmic. A helical membrane pass occupies residues 371–391 (ILVGSGVQLFLMVTCSIFFAA). At 392-405 (LGFLSPSSRGSLAT) the chain is on the lumenal side. Residues 406 to 426 (VMFILYALFGFVGSYTSMGIY) traverse the membrane as a helical segment. The Cytoplasmic segment spans residues 427–442 (KFFNGPYWKANLILTP). The chain crosses the membrane as a helical span at residues 443–463 (LLVPGAILLIIIALNFFLMFV). Over 464–474 (HSSGVIPASTL) the chain is Lumenal. Residues 475 to 495 (FFMVFLWFLFSIPLSFAGSLI) traverse the membrane as a helical segment. Over 496-527 (ARKRCHWDEHPTKTNQIARQIPFQPWYLKTIP) the chain is Cytoplasmic. The chain crosses the membrane as a helical span at residues 528–548 (ATLIAGIFPFGSIAVELYFIY). Topologically, residues 549-560 (TSLWFNKIFYMF) are lumenal. The helical transmembrane segment at 561–581 (GFLFFSFLLLTLTSSLVTILI) threads the bilayer. Residues 582–596 (TYHSLCLENWKWQWR) are Cytoplasmic-facing. Residues 597-617 (GFIIGGAGCALYVFIHSILFT) traverse the membrane as a helical segment. Residues 618–635 (KFKLGGFTTIVLYVGYSS) are Lumenal-facing. The chain crosses the membrane as a helical span at residues 636–656 (VISLLCCLVTGSIGFISSMLF). Residues 657 to 667 (VRKIYSSIKVD) are Cytoplasmic-facing.

This sequence belongs to the nonaspanin (TM9SF) (TC 9.A.2) family.

The protein resides in the endosome membrane. Its subcellular location is the vacuole membrane. In terms of biological role, with TMN2 and TMN3, plays a critical role in the late stages of a nutrient-controlled pathway notably regulating FLO11 gene expression. Acts downstream of RAS2 and TOR. Essential for cell adhesion and filamentous growth. May play a role as effector of cellular copper homeostasis. The polypeptide is Transmembrane 9 superfamily member 1 (EMP70) (Saccharomyces cerevisiae (strain ATCC 204508 / S288c) (Baker's yeast)).